The following is a 262-amino-acid chain: uncharacterized protein (262 aa).

Helical transmembrane passes span 7–27 (LAVA…LAHM), 58–78 (DTLG…IVFG), 114–134 (FLAF…VLGG), 140–160 (GGFQ…IAFG), 179–199 (GALG…YYLF), and 216–236 (IITA…VLAG).

The protein localises to the cell membrane. This is an uncharacterized protein from Methanocaldococcus jannaschii (strain ATCC 43067 / DSM 2661 / JAL-1 / JCM 10045 / NBRC 100440) (Methanococcus jannaschii).